We begin with the raw amino-acid sequence, 121 residues long: uncharacterized protein (121 aa).

Residues 47–101 enclose the Cupin type-2 domain; sequence SEVPHYHAEHDLTFTVLKGKGELYLEGEKKKLKEGDWAFIPKGAVHFYRNTSELS.

This is an uncharacterized protein from Aquifex aeolicus (strain VF5).